The sequence spans 317 residues: TPR repeat-containing thioredoxin TDX (317 aa).

Positions 1-48 (MATAGASSFEDEIMESDIELEGEAVEPDNDPPQKMGDPSVEVSDEKRD) are disordered. Residues 9–29 (FEDEIMESDIELEGEAVEPDN) show a composition bias toward acidic residues. TPR repeat units follow at residues 50–83 (AQLC…NPTS), 85–117 (IAYA…NPDS), and 119–151 (KGYK…DYDE). The Thioredoxin domain maps to 189–316 (EKQRKHAEEV…LERKVAQHGS (128 aa)). Catalysis depends on nucleophile residues Cys242 and Cys245. Cysteines 242 and 245 form a disulfide.

It belongs to the thioredoxin family.

Its function is as follows. Probable thiol-disulfide oxidoreductase that may participate in various redox reactions and act as chaperone under heat shock. May interact with HSP70 proteins through the TPR repeats. The polypeptide is TPR repeat-containing thioredoxin TDX (Oryza sativa subsp. japonica (Rice)).